A 43-amino-acid polypeptide reads, in one-letter code: MVCKGCGTNCQCSAQKCGDNCACNKDCQCVCKNGPKDQCCSNK.

Blocked amino end (Met) is present on Met1.

The protein belongs to the metallothionein superfamily. Type 5 family.

This protein binds cations of several transition elements. Thought to be involved in metal ion homeostasis. The polypeptide is Metallothionein-2 (MtnB) (Drosophila melanogaster (Fruit fly)).